Reading from the N-terminus, the 428-residue chain is Adenylosuccinate synthetase (428 aa).

GTP-binding positions include 12–18 (GDEGKGK) and 40–42 (GHT). Asp13 acts as the Proton acceptor in catalysis. 2 residues coordinate Mg(2+): Asp13 and Gly40. IMP is bound by residues 13-16 (DEGK), 38-41 (NAGH), Thr128, Arg142, Gln223, Thr238, and Arg302. His41 functions as the Proton donor in the catalytic mechanism. Substrate is bound at residue 298 to 304 (TTTGRPR). GTP contacts are provided by residues Arg304, 330–332 (KLD), and 412–414 (SVG).

The protein belongs to the adenylosuccinate synthetase family. In terms of assembly, homodimer. Requires Mg(2+) as cofactor.

The protein localises to the cytoplasm. The enzyme catalyses IMP + L-aspartate + GTP = N(6)-(1,2-dicarboxyethyl)-AMP + GDP + phosphate + 2 H(+). Its pathway is purine metabolism; AMP biosynthesis via de novo pathway; AMP from IMP: step 1/2. In terms of biological role, plays an important role in the de novo pathway of purine nucleotide biosynthesis. Catalyzes the first committed step in the biosynthesis of AMP from IMP. The sequence is that of Adenylosuccinate synthetase from Brevibacillus brevis (strain 47 / JCM 6285 / NBRC 100599).